Here is a 420-residue protein sequence, read N- to C-terminus: F-box/LRR-repeat protein At2g43260 (420 aa).

In terms of domain architecture, F-box spans 7-53; that stretch reads NPNSIDILPELLEEVLLRLPTKSILKCRIVSKQWRSLLESSRFAERH. LRR repeat units lie at residues 112 to 135 and 226 to 251; these read QDWI…LNHN and VYRI…QITV.

The protein is F-box/LRR-repeat protein At2g43260 of Arabidopsis thaliana (Mouse-ear cress).